Consider the following 728-residue polypeptide: E3 ubiquitin-protein ligase TRIM36 (728 aa).

The RING-type; degenerate zinc-finger motif lies at 33 to 84 (CPACKELFTHPLILPCQHSICHKCVKELLLTLDDSFNDVGSDNSNQSSPRLR). 2 consecutive B box-type zinc fingers follow at residues 154–192 (AIMC…WGTI) and 207–249 (PKIL…VTTM). Zn(2+)-binding residues include C212, H215, C235, and H241. Positions 271-345 (ESQVKSQISE…MEEYQGLLEN (75 aa)) form a coiled coil. Residues 356–413 (LKETDQSCFVQTAKQLHLRIQKATESLKSFRPAAQTSFEDYVVNTSKQTELLGELSFF) enclose the COS domain. The Fibronectin type-III domain occupies 419 to 510 (VPEINEEQSK…RELILHTPPA (92 aa)). The region spanning 508–720 (PPAPVFSFLF…IQLEEPITAK (213 aa)) is the B30.2/SPRY domain.

The protein belongs to the TRIM/RBCC family. Interacts with CENPH. As to expression, highly expressed in testis, prostate and brain. Weakly expressed in kidney, lung and heart. Expressed in fetal tissues.

The protein localises to the cytoplasm. It localises to the cytoplasmic vesicle. Its subcellular location is the secretory vesicle. It is found in the acrosome. The protein resides in the cytoskeleton. The catalysed reaction is S-ubiquitinyl-[E2 ubiquitin-conjugating enzyme]-L-cysteine + [acceptor protein]-L-lysine = [E2 ubiquitin-conjugating enzyme]-L-cysteine + N(6)-ubiquitinyl-[acceptor protein]-L-lysine.. Functionally, E3 ubiquitin-protein ligase which mediates ubiquitination and subsequent proteasomal degradation of target proteins. Involved in chromosome segregation and cell cycle regulation. May play a role in the acrosome reaction and fertilization. The polypeptide is E3 ubiquitin-protein ligase TRIM36 (TRIM36) (Homo sapiens (Human)).